A 562-amino-acid chain; its full sequence is Dihydroxy-acid dehydratase (562 aa).

Position 51 (cysteine 51) interacts with [2Fe-2S] cluster. Residue aspartate 83 coordinates Mg(2+). Cysteine 124 is a binding site for [2Fe-2S] cluster. 2 residues coordinate Mg(2+): aspartate 125 and lysine 126. N6-carboxylysine is present on lysine 126. Cysteine 196 contacts [2Fe-2S] cluster. Mg(2+) is bound at residue glutamate 448. Serine 474 acts as the Proton acceptor in catalysis.

This sequence belongs to the IlvD/Edd family. Homodimer. [2Fe-2S] cluster serves as cofactor. The cofactor is Mg(2+).

The catalysed reaction is (2R)-2,3-dihydroxy-3-methylbutanoate = 3-methyl-2-oxobutanoate + H2O. It catalyses the reaction (2R,3R)-2,3-dihydroxy-3-methylpentanoate = (S)-3-methyl-2-oxopentanoate + H2O. It participates in amino-acid biosynthesis; L-isoleucine biosynthesis; L-isoleucine from 2-oxobutanoate: step 3/4. It functions in the pathway amino-acid biosynthesis; L-valine biosynthesis; L-valine from pyruvate: step 3/4. In terms of biological role, functions in the biosynthesis of branched-chain amino acids. Catalyzes the dehydration of (2R,3R)-2,3-dihydroxy-3-methylpentanoate (2,3-dihydroxy-3-methylvalerate) into 2-oxo-3-methylpentanoate (2-oxo-3-methylvalerate) and of (2R)-2,3-dihydroxy-3-methylbutanoate (2,3-dihydroxyisovalerate) into 2-oxo-3-methylbutanoate (2-oxoisovalerate), the penultimate precursor to L-isoleucine and L-valine, respectively. This chain is Dihydroxy-acid dehydratase, found in Pyrobaculum aerophilum (strain ATCC 51768 / DSM 7523 / JCM 9630 / CIP 104966 / NBRC 100827 / IM2).